Reading from the N-terminus, the 364-residue chain is C3a anaphylatoxin chemotactic receptor (364 aa).

Residues 1-50 (MGDNMDFSEHYGNFSENYVTESYGEFDLYYDPLNETSLSEQGHRSIWVLS) are Extracellular-facing. N-linked (GlcNAc...) asparagine glycans are attached at residues Asn-13 and Asn-34. A helical transmembrane segment spans residues 51-71 (IVLCSIACVLGITGNAFVIWI). The Cytoplasmic portion of the chain corresponds to 72–82 (AGVKMKRTVNT). A helical membrane pass occupies residues 83–103 (IWFVNLAAADLLCCVSIPFSI). The Extracellular portion of the chain corresponds to 104–120 (ADIILNSHWPYGEAMCK). A disulfide bond links Cys-119 and Cys-198. A helical transmembrane segment spans residues 121–141 (ILPSMVVLNMFASVFTLVLIS). The Cytoplasmic segment spans residues 142 to 159 (LDRFALVILPVWAQNHRS). Residues 160–180 (ITLAWLLCGLVWVLGLLLSLP) form a helical membrane-spanning segment. The Extracellular segment spans residues 181 to 220 (SMIYREIVVHDDMNITLCIYNHLQDKTEGNQSAIKAIHVT). A helical membrane pass occupies residues 221–241 (RLILGFLIPLLVIAVCYLLIG). Over 242 to 256 (RRVSSGRFKSQRAFQ) the chain is Cytoplasmic. The chain crosses the membrane as a helical span at residues 257–277 (IILVVVTTFFVCWLPYHVIGL). The Extracellular segment spans residues 278-295 (VIEYGKEASQVMARALDP). The helical transmembrane segment at 296–316 (LAISLAYVNSCLNPVLYVFMG) threads the bilayer. Over 317-364 (QDFKERVRVSLRKIFEKVFSEDVTLRSSVYSKGQSQLSRATNSSEAQV) the chain is Cytoplasmic.

It belongs to the G-protein coupled receptor 1 family.

Its subcellular location is the cell membrane. Functionally, receptor for the chemotactic and inflammatory peptide anaphylatoxin C3a. This receptor stimulates chemotaxis, granule enzyme release and superoxide anion production. The sequence is that of C3a anaphylatoxin chemotactic receptor (c3ar1) from Oncorhynchus mykiss (Rainbow trout).